Consider the following 1114-residue polypeptide: Kinesin-like protein KIN-12B (1114 aa).

The segment at 1–119 (MRSLFSSKLS…GGGGGDSGVQ (119 aa)) is disordered. Positions 98–107 (SAASPAPEGA) are enriched in low complexity. The Kinesin motor domain maps to 117–459 (GVQVVVRVRP…LRFAHRAKDI (343 aa)). 197–204 (GQTGSGKT) contacts ATP. 2 coiled-coil regions span residues 772 to 810 (VLSAKIELERIQEELERYRNFKDEKEVLLEEIQHLKNQL) and 999 to 1043 (ELLV…DQEV). Positions 1055–1065 (LPSNVVQSPEP) are enriched in polar residues. Residues 1055 to 1081 (LPSNVVQSPEPSETGPARYDTGGSFGD) form a disordered region.

Belongs to the TRAFAC class myosin-kinesin ATPase superfamily. Kinesin family. KIN-12 subfamily.

The polypeptide is Kinesin-like protein KIN-12B (Oryza sativa subsp. japonica (Rice)).